The chain runs to 385 residues: Pectate lyase E (385 aa).

The signal sequence occupies residues 1 to 30 (MKNTRVRSIGTKSLLAAVVTAALMATSAYA). Ca(2+) is bound at residue Asp-164. Repeat unit 1 spans residues 177 to 182 (DHVTIS). Positions 177 to 218 (DHVTISDGSFTDDKYTTKDGEKYVQHDGALDIKKGSDYVTIS) are 2 X 6 AA approximate repeats. Position 207 (Asp-207) interacts with Ca(2+). Residues 213–218 (DYVTIS) form repeat 2. Arg-260 is a catalytic residue.

It belongs to the polysaccharide lyase 1 family. PLBC subfamily. Requires Ca(2+) as cofactor.

Its subcellular location is the secreted. The catalysed reaction is Eliminative cleavage of (1-&gt;4)-alpha-D-galacturonan to give oligosaccharides with 4-deoxy-alpha-D-galact-4-enuronosyl groups at their non-reducing ends.. It participates in glycan metabolism; pectin degradation; 2-dehydro-3-deoxy-D-gluconate from pectin: step 2/5. Its function is as follows. Involved in maceration and soft-rotting of plant tissue. This chain is Pectate lyase E (pelE), found in Dickeya chrysanthemi (Pectobacterium chrysanthemi).